Reading from the N-terminus, the 350-residue chain is Probable dual-specificity RNA methyltransferase RlmN (350 aa).

Residues 105-342 (ANGKNSVCIS…VRQSKGANIN (238 aa)) enclose the Radical SAM core domain. Cysteines 112 and 345 form a disulfide. The [4Fe-4S] cluster site is built by Cys-119, Cys-123, and Cys-126. Residues 166–167 (GE), Ser-198, 221–223 (SLH), and Asn-302 contribute to the S-adenosyl-L-methionine site. Residue Cys-345 is the S-methylcysteine intermediate of the active site.

This sequence belongs to the radical SAM superfamily. RlmN family. [4Fe-4S] cluster serves as cofactor.

It localises to the cytoplasm. The enzyme catalyses adenosine(2503) in 23S rRNA + 2 reduced [2Fe-2S]-[ferredoxin] + 2 S-adenosyl-L-methionine = 2-methyladenosine(2503) in 23S rRNA + 5'-deoxyadenosine + L-methionine + 2 oxidized [2Fe-2S]-[ferredoxin] + S-adenosyl-L-homocysteine. It carries out the reaction adenosine(37) in tRNA + 2 reduced [2Fe-2S]-[ferredoxin] + 2 S-adenosyl-L-methionine = 2-methyladenosine(37) in tRNA + 5'-deoxyadenosine + L-methionine + 2 oxidized [2Fe-2S]-[ferredoxin] + S-adenosyl-L-homocysteine. Its function is as follows. Specifically methylates position 2 of adenine 2503 in 23S rRNA and position 2 of adenine 37 in tRNAs. In Endomicrobium trichonymphae, this protein is Probable dual-specificity RNA methyltransferase RlmN.